The following is a 334-amino-acid chain: Probable fructose-bisphosphate aldolase class 1 (334 aa).

This sequence belongs to the class I fructose-bisphosphate aldolase family.

It catalyses the reaction beta-D-fructose 1,6-bisphosphate = D-glyceraldehyde 3-phosphate + dihydroxyacetone phosphate. The protein operates within carbohydrate degradation; glycolysis; D-glyceraldehyde 3-phosphate and glycerone phosphate from D-glucose: step 4/4. This is Probable fructose-bisphosphate aldolase class 1 from Xanthomonas axonopodis pv. citri (strain 306).